A 188-amino-acid chain; its full sequence is Protein SYC1 (188 aa).

Component of the cleavage and polyadenylation factor (CPF) complex, which is composed of at least PTI1, SYC1, SSU72, GLC7, MPE1, REF2, PFS2, PTA1, YSH1/BRR5, SWD2, CFT2/YDH1, YTH1, CFT1/YHH1, FIP1 and PAP1. Component of the APT complex, which is a subcomplex of CPF, and is composed of PTI1, SYC1, SSU72, GLC7, REF2, PTA1 and SWD2.

It localises to the nucleus. Functionally, component of the cleavage and polyadenylation factor (CPF) complex, which plays a key role in polyadenylation-dependent pre-mRNA 3'-end formation and cooperates with cleavage factors including the CFIA complex and NAB4/CFIB. Component of the APT complex, which may be involved in polyadenylation-independent transcript 3'-end formation, including snoRNAs and snRNAs. This Saccharomyces cerevisiae (strain ATCC 204508 / S288c) (Baker's yeast) protein is Protein SYC1 (SYC1).